The primary structure comprises 251 residues: NADPH-dependent oxidoreductase (251 aa).

The protein belongs to the flavin oxidoreductase frp family. The cofactor is FMN.

Reduces FMN, organic nitro compounds and disulfide DTNB. Involved in maintenance of the cellular redox state and the disulfide stress response. The protein is NADPH-dependent oxidoreductase (nfrA) of Staphylococcus epidermidis (strain ATCC 35984 / DSM 28319 / BCRC 17069 / CCUG 31568 / BM 3577 / RP62A).